Here is a 511-residue protein sequence, read N- to C-terminus: 2-isopropylmalate synthase (511 aa).

The Pyruvate carboxyltransferase domain maps to 5 to 267 (LIVFDTTLRD…DTNVDISQIV (263 aa)). Mn(2+)-binding residues include Asp14, His202, His204, and Asn238. The tract at residues 393–511 (KLSWLKVVSE…YPVERAYPQV (119 aa)) is regulatory domain.

It belongs to the alpha-IPM synthase/homocitrate synthase family. LeuA type 1 subfamily. As to quaternary structure, homodimer. Requires Mn(2+) as cofactor.

The protein resides in the cytoplasm. It carries out the reaction 3-methyl-2-oxobutanoate + acetyl-CoA + H2O = (2S)-2-isopropylmalate + CoA + H(+). It participates in amino-acid biosynthesis; L-leucine biosynthesis; L-leucine from 3-methyl-2-oxobutanoate: step 1/4. In terms of biological role, catalyzes the condensation of the acetyl group of acetyl-CoA with 3-methyl-2-oxobutanoate (2-ketoisovalerate) to form 3-carboxy-3-hydroxy-4-methylpentanoate (2-isopropylmalate). This chain is 2-isopropylmalate synthase, found in Nitrosococcus oceani (strain ATCC 19707 / BCRC 17464 / JCM 30415 / NCIMB 11848 / C-107).